The sequence spans 306 residues: Follistatin-related protein 1 (306 aa).

Residues 1-18 (MWKRWLALALVTIALVHG) form the signal peptide. One can recognise a Follistatin-like domain in the interval 28–51 (ICANVFCGAGRECAVTEKGEPTCL). 5 disulfide bridges follow: Cys-29/Cys-40, Cys-34/Cys-50, Cys-52/Cys-82, Cys-56/Cys-75, and Cys-64/Cys-96. The 53-residue stretch at 46-98 (GEPTCLCIEQCKPHKRPVCGSNGKTYLNHCELHRDACLTGSKIQVDYDGHCKE) folds into the Kazal-like domain. Residue Asn-142 is glycosylated (N-linked (GlcNAc...) asparagine). One can recognise an EF-hand 1 domain in the interval 142 to 176 (NYSEILDKYFKSFDNGDSHLDSSEFLKFVEQNETA). At Ser-163 the chain carries Phosphoserine. 2 N-linked (GlcNAc...) asparagine glycosylation sites follow: Asn-173 and Asn-178. The region spanning 191–226 (LRGLCVDALIELSDENADWKLSFQEFLKCLNPSFNP) is the EF-hand 2 domain. In terms of domain architecture, VWFC spans 231 to 285 (CALEDETYADGAETEVDCNRCVCSCGHWVCTAMTCDGKNQKGVQTHTEEEMTRYA).

In terms of assembly, homodimer. Interacts with SCN10A. Interacts with DIP2A; DIP2A may act as a cell surface receptor for FSTL1. Interacts with BMP4. Interacts with CD14; this interaction promotes TL4-mediated signaling cascade.

It localises to the secreted. In terms of biological role, secreted glycoprotein that is involved in various physiological processes, such as angiogenesis, regulation of the immune response, cell proliferation and differentiation. Plays a role in the development of the central nervous system, skeletal system, lungs, and ureter. Promotes endothelial cell survival, migration and differentiation into network structures in an AKT-dependent manner. Also promotes survival of cardiac myocytes. Initiates various signaling cascades by activating different receptors on the cell surface such as DIP2A, TLR4 or BMP receptors. The sequence is that of Follistatin-related protein 1 (Fstl1) from Rattus norvegicus (Rat).